The primary structure comprises 360 residues: tRNA (guanine-N(7)-)-methyltransferase (360 aa).

The tract at residues 1-32 is disordered; sequence MTPPPPKRQKRDEYRKATAEAASQPGPSDVAE. S-adenosyl-L-methionine is bound by residues Gly99 and 122 to 123; that span reads EI. Positions 177–196 are disordered; sequence ADAASPVLSTDTEHTPTTLV. Residues 183-196 are compositionally biased toward polar residues; it reads VLSTDTEHTPTTLV. Residues 209–210 and Cys229 contribute to the S-adenosyl-L-methionine site; that span reads NT. Asp232 is an active-site residue. 332-334 serves as a coordination point for S-adenosyl-L-methionine; that stretch reads TEE.

Belongs to the class I-like SAM-binding methyltransferase superfamily. TrmB family. Forms a complex with trm82.

It is found in the nucleus. The catalysed reaction is guanosine(46) in tRNA + S-adenosyl-L-methionine = N(7)-methylguanosine(46) in tRNA + S-adenosyl-L-homocysteine. Its pathway is tRNA modification; N(7)-methylguanine-tRNA biosynthesis. Its function is as follows. Catalyzes the formation of N(7)-methylguanine at position 46 (m7G46) in tRNA. This Neosartorya fischeri (strain ATCC 1020 / DSM 3700 / CBS 544.65 / FGSC A1164 / JCM 1740 / NRRL 181 / WB 181) (Aspergillus fischerianus) protein is tRNA (guanine-N(7)-)-methyltransferase (trm8).